The following is a 403-amino-acid chain: Peroxisomal membrane protein PEX13 (403 aa).

Residues 1 to 11 (MASQPPPPPKP) show a composition bias toward pro residues. A disordered region spans residues 1–69 (MASQPPPPPK…SQQTGSGNLN (69 aa)). At 1–134 (MASQPPPPPK…SSRGAFQSIE (134 aa)) the chain is on the peroxisomal matrix side. Positions 59 to 69 (PSQQTGSGNLN) are enriched in polar residues. The helical transmembrane segment at 135-155 (SIVHAFASVSMMMDATFSAVY) threads the bilayer. A targeting to peroxisomes region spans residues 145–233 (MMMDATFSAV…EDRAANSAKS (89 aa)). Residues 156–174 (NSFRAVLDVANHFSRLKIH) lie on the Cytoplasmic side of the membrane. Residues 175–192 (FTKVFSAFALVRTIRYLY) form a helical membrane-spanning segment. Residues 175 to 196 (FTKVFSAFALVRTIRYLYRRLQ) are interaction with PEX19. Topologically, residues 193-233 (RRLQWMIGLRRGLENEDLWAESEGTVACLGAEDRAANSAKS) are peroxisomal matrix. Residues 234–254 (WPIFLFFAVILGGPYLIWKLL) form a helical membrane-spanning segment. At 255–403 (STHSDEVTDS…TGKNGDKQDL (149 aa)) the chain is on the cytoplasmic side. Residues 272–336 (DDHVVARAEY…PANYVKILGK (65 aa)) form the SH3 domain. At Ser354 the chain carries Phosphoserine.

It belongs to the peroxin-13 family. Interacts (via SH3 domain) with PEX14 (via SH3-binding motif); forming the PEX13-PEX14 docking complex. Interacts with PEX19.

Its subcellular location is the peroxisome membrane. Its function is as follows. Component of the PEX13-PEX14 docking complex, a translocon channel that specifically mediates the import of peroxisomal cargo proteins bound to PEX5 receptor. The PEX13-PEX14 docking complex forms a large import pore which can be opened to a diameter of about 9 nm. Mechanistically, PEX5 receptor along with cargo proteins associates with the PEX14 subunit of the PEX13-PEX14 docking complex in the cytosol, leading to the insertion of the receptor into the organelle membrane with the concomitant translocation of the cargo into the peroxisome matrix. Involved in the import of PTS1- and PTS2-type containing proteins. The chain is Peroxisomal membrane protein PEX13 (PEX13) from Bos taurus (Bovine).